A 125-amino-acid chain; its full sequence is Gem-associated protein 7 (125 aa).

N-acetylmethionine is present on M1. An SUZ-C domain is found at 1–29; the sequence is MQTPLATPVPVLRLPRGPDGSNRGFAPDG. A disordered region spans residues 1-52; sequence MQTPLATPVPVLRLPRGPDGSNRGFAPDGRRAPPKPEVPEPPESRESWEQQA. T3 carries the phosphothreonine modification. One can recognise a Sm domain in the interval 59–125; it reads RYLRSLLAMV…SDIISYTFKP (67 aa).

Belongs to the gemin-7 family. In terms of assembly, part of the core SMN complex that contains SMN1, GEMIN2/SIP1, DDX20/GEMIN3, GEMIN4, GEMIN5, GEMIN6, GEMIN7, GEMIN8 and STRAP/UNRIP. Part of the SMN-Sm complex that contains SMN1, GEMIN2/SIP1, DDX20/GEMIN3, GEMIN4, GEMIN5, GEMIN6, GEMIN7, GEMIN8, STRAP/UNRIP and the Sm proteins SNRPB, SNRPD1, SNRPD2, SNRPD3, SNRPE, SNRPF and SNRPG. Interacts with GEMIN6; the interaction is direct. Interacts with STRAP/UNRIP; the interaction is direct. Interacts with GEMIN8; the interaction is direct. Interacts with SNRPB, SNRPD2, SNRPD3 and SNRPE; the interaction is direct.

It is found in the nucleus. The protein resides in the nucleoplasm. It localises to the gem. The protein localises to the cytoplasm. In terms of biological role, the SMN complex catalyzes the assembly of small nuclear ribonucleoproteins (snRNPs), the building blocks of the spliceosome, and thereby plays an important role in the splicing of cellular pre-mRNAs. Most spliceosomal snRNPs contain a common set of Sm proteins SNRPB, SNRPD1, SNRPD2, SNRPD3, SNRPE, SNRPF and SNRPG that assemble in a heptameric protein ring on the Sm site of the small nuclear RNA to form the core snRNP (Sm core). In the cytosol, the Sm proteins SNRPD1, SNRPD2, SNRPE, SNRPF and SNRPG are trapped in an inactive 6S pICln-Sm complex by the chaperone CLNS1A that controls the assembly of the core snRNP. To assemble core snRNPs, the SMN complex accepts the trapped 5Sm proteins from CLNS1A forming an intermediate. Binding of snRNA inside 5Sm triggers eviction of the SMN complex, thereby allowing binding of SNRPD3 and SNRPB to complete assembly of the core snRNP. The chain is Gem-associated protein 7 (GEMIN7) from Bos taurus (Bovine).